The chain runs to 520 residues: Cyclin-L2 (520 aa).

Cyclin-like stretches follow at residues 81–183 (ELIQ…RVLK) and 196–280 (KIIV…KILQ). Residues 309–520 (RAKGLLPPGS…DHPGHSRHRR (212 aa)) are disordered. Phosphoserine occurs at positions 330, 337, 347, and 350. The span at 356 to 366 (RKMEGPKKAKG) shows a compositional bias: basic and acidic residues. Serine 368 is modified (phosphoserine). Residues 384–422 (RSREQSYSRSPSRSASPKRRKSDSGSTSGGSKSQSRSRS) form an RS region. Over residues 407 to 429 (SGSTSGGSKSQSRSRSRSDSPPR) the composition is skewed to low complexity. Over residues 440–453 (SEVRGSRKSKDCKH) the composition is skewed to basic and acidic residues. A compositionally biased stretch (basic residues) spans 454-471 (LTQKPHKSRSRSSSRSRS). 2 stretches are compositionally biased toward basic and acidic residues: residues 472-481 (RSRERTDSSG) and 489-514 (YYRDQRRERSRSYERTGHRYERDHPG).

This sequence belongs to the cyclin family. Cyclin L subfamily. Interacts with CDK11A, CDK11B, CDK12, CDK13 and POLR2A, the hyperphosphorylated C-terminal domain (CTD) of RNA polymerase II. May form a ternary complex with CDK11B and casein kinase II (CKII). Interacts with pre-mRNA-splicing factors, including at least SRSF1, SRSF2 and SRSF7/SLU7.

The protein localises to the nucleus speckle. Its subcellular location is the nucleus. It localises to the nucleoplasm. Functionally, involved in pre-mRNA splicing. May induce cell death, possibly by acting on the transcription and RNA processing of apoptosis-related factors. This Rattus norvegicus (Rat) protein is Cyclin-L2 (Ccnl2).